The chain runs to 325 residues: Ferrochelatase (325 aa).

Histidine 172 and glutamate 267 together coordinate Fe cation.

The protein belongs to the ferrochelatase family.

The protein localises to the cytoplasm. The enzyme catalyses heme b + 2 H(+) = protoporphyrin IX + Fe(2+). It functions in the pathway porphyrin-containing compound metabolism; protoheme biosynthesis; protoheme from protoporphyrin-IX: step 1/1. Catalyzes the ferrous insertion into protoporphyrin IX. The sequence is that of Ferrochelatase from Acidobacterium capsulatum (strain ATCC 51196 / DSM 11244 / BCRC 80197 / JCM 7670 / NBRC 15755 / NCIMB 13165 / 161).